Consider the following 138-residue polypeptide: Small ribosomal subunit protein uS11c (138 aa).

The interval 1-22 (MAKSIPKTGSRKNVRIGSRNQT) is disordered.

Belongs to the universal ribosomal protein uS11 family. As to quaternary structure, part of the 30S ribosomal subunit.

It is found in the plastid. Its subcellular location is the chloroplast. The sequence is that of Small ribosomal subunit protein uS11c from Phaseolus angularis (Azuki bean).